Here is a 335-residue protein sequence, read N- to C-terminus: Selenide, water dikinase (335 aa).

Sec-7 is an active-site residue. Sec-7 is a non-standard amino acid (selenocysteine). ATP contacts are provided by residues Lys-10 and 36–38 (LGD). Position 39 (Asp-39) interacts with Mg(2+). Residues Asp-55, Asp-78, and 126 to 128 (GHT) contribute to the ATP site. Asp-78 lines the Mg(2+) pocket. Mg(2+) is bound at residue Asp-232.

This sequence belongs to the selenophosphate synthase 1 family. Class I subfamily. Homodimer. It depends on Mg(2+) as a cofactor.

The catalysed reaction is hydrogenselenide + ATP + H2O = selenophosphate + AMP + phosphate + 2 H(+). In terms of biological role, synthesizes selenophosphate from selenide and ATP. This chain is Selenide, water dikinase, found in Methanococcus maripaludis (strain DSM 14266 / JCM 13030 / NBRC 101832 / S2 / LL).